A 99-amino-acid chain; its full sequence is DNA-directed RNA polymerase subunit omega (99 aa).

The protein belongs to the RNA polymerase subunit omega family. In terms of assembly, the RNAP catalytic core consists of 2 alpha, 1 beta, 1 beta' and 1 omega subunit. When a sigma factor is associated with the core the holoenzyme is formed, which can initiate transcription.

It carries out the reaction RNA(n) + a ribonucleoside 5'-triphosphate = RNA(n+1) + diphosphate. Functionally, promotes RNA polymerase assembly. Latches the N- and C-terminal regions of the beta' subunit thereby facilitating its interaction with the beta and alpha subunits. In Xanthomonas oryzae pv. oryzae (strain MAFF 311018), this protein is DNA-directed RNA polymerase subunit omega.